A 241-amino-acid chain; its full sequence is Probable transcriptional regulatory protein Mpe_A1337 (241 aa).

Residues 1 to 20 (MAGHSKWANIQHRKGRQDEK) are disordered.

This sequence belongs to the TACO1 family.

The protein resides in the cytoplasm. The protein is Probable transcriptional regulatory protein Mpe_A1337 of Methylibium petroleiphilum (strain ATCC BAA-1232 / LMG 22953 / PM1).